The following is a 122-amino-acid chain: Large ribosomal subunit protein uL14c (122 aa).

It belongs to the universal ribosomal protein uL14 family. In terms of assembly, part of the 50S ribosomal subunit.

The protein localises to the plastid. Its subcellular location is the chloroplast. Functionally, binds to 23S rRNA. This is Large ribosomal subunit protein uL14c from Pyropia yezoensis (Susabi-nori).